The chain runs to 432 residues: Alkaline protease secretion protein AprE (432 aa).

At 1–14 the chain is on the cytoplasmic side; that stretch reads MTRTVKRDENAYAR. The helical transmembrane segment at 15 to 36 threads the bilayer; sequence LGWLLVLFGFGGALLWAAFAPL. The Periplasmic segment spans residues 37–432; it reads DQGVAVPATV…DRAHVALAEN (396 aa).

This sequence belongs to the membrane fusion protein (MFP) (TC 8.A.1) family.

It is found in the cell inner membrane. In terms of biological role, involved in the secretion of alkaline protease. This Pseudomonas aeruginosa (strain ATCC 15692 / DSM 22644 / CIP 104116 / JCM 14847 / LMG 12228 / 1C / PRS 101 / PAO1) protein is Alkaline protease secretion protein AprE (aprE).